The chain runs to 308 residues: rRNA 2'-O-methyltransferase fibrillarin 1 (308 aa).

Positions 1 to 68 (MRPPVTGGRG…PRGGMKGGSK (68 aa)) are disordered. The segment covering 22–35 (GRGFGGGRSFGGGR) has biased composition (gly residues). The span at 42 to 52 (SGPRGRGRGAP) shows a compositional bias: basic residues. The span at 53–65 (RGRGGPPRGGMKG) shows a compositional bias: gly residues. S-adenosyl-L-methionine is bound by residues 156-157 (TT), 175-176 (EF), 200-201 (DA), and 220-223 (DVAQ).

It belongs to the methyltransferase superfamily. Fibrillarin family. Component of box C/D small nucleolar ribonucleoprotein (snoRNP) particles. Interacts with SKP1A. As to expression, expressed in roots, leaves and flowers. Expressed in stems.

The protein localises to the nucleus. It localises to the nucleolus. It catalyses the reaction a ribonucleotide in rRNA + S-adenosyl-L-methionine = a 2'-O-methylribonucleotide in rRNA + S-adenosyl-L-homocysteine + H(+). The enzyme catalyses L-glutaminyl-[histone H2A] + S-adenosyl-L-methionine = N(5)-methyl-L-glutaminyl-[histone H2A] + S-adenosyl-L-homocysteine + H(+). S-adenosyl-L-methionine-dependent methyltransferase that has the ability to methylate both RNAs and proteins. Involved in pre-rRNA processing. Utilizes the methyl donor S-adenosyl-L-methionine to catalyze the site-specific 2'-hydroxyl methylation of ribose moieties in pre-ribosomal RNA. Site specificity is provided by a guide RNA that base pairs with the substrate. Methylation occurs at a characteristic distance from the sequence involved in base pairing with the guide RNA. Also acts as a protein methyltransferase by mediating methylation of 'Gln-105' of histone H2A (H2AQ105me), a modification that impairs binding of the FACT complex and is specifically present at 35S ribosomal DNA locus. Binds monophosphate phosphoinositides in vitro. This Arabidopsis thaliana (Mouse-ear cress) protein is rRNA 2'-O-methyltransferase fibrillarin 1.